Here is a 463-residue protein sequence, read N- to C-terminus: Putative sodium-coupled neutral amino acid transporter 11 (463 aa).

Positions 1–27 are disordered; the sequence is MGYPGQRPVIPPQSHRDDRETLVSEHK. Positions 14–25 are enriched in basic and acidic residues; the sequence is SHRDDRETLVSE. Helical transmembrane passes span 38-58, 65-85, 105-125, 150-170, 178-198, 225-245, 256-276, 298-320, 336-356, 358-378, and 397-417; these read AVFN…PYSM, LGIL…ILLI, GFPG…IAMI, LLIG…LPLS, LGKI…IVVA, VGVM…YGSL, IIHV…TCGY, VTFG…CFVT, VCHI…SLLI, CLGI…IFII, and IMSC…FVMA. 3 N-linked (GlcNAc...) asparagine glycosylation sites follow: Asn-437, Asn-442, and Asn-458.

The protein belongs to the amino acid/polyamine transporter 2 family.

The protein resides in the membrane. Putative sodium-dependent amino acid/proton antiporter. This Bos taurus (Bovine) protein is Putative sodium-coupled neutral amino acid transporter 11 (SLC38A11).